The sequence spans 389 residues: Phosphoglycerate kinase (389 aa).

Substrate-binding positions include 21-23 (DLN), Arg-36, 59-62 (HLGR), Arg-112, and Arg-145. ATP-binding positions include Lys-196, Glu-313, and 342-345 (GGDT).

The protein belongs to the phosphoglycerate kinase family. As to quaternary structure, monomer.

It is found in the cytoplasm. The catalysed reaction is (2R)-3-phosphoglycerate + ATP = (2R)-3-phospho-glyceroyl phosphate + ADP. It participates in carbohydrate degradation; glycolysis; pyruvate from D-glyceraldehyde 3-phosphate: step 2/5. The sequence is that of Phosphoglycerate kinase from Mannheimia succiniciproducens (strain KCTC 0769BP / MBEL55E).